The sequence spans 104 residues: Nucleoid-associated protein Bsph_0039 (104 aa).

The span at 1-12 (MRGMGNMQGMMK) shows a compositional bias: low complexity. The tract at residues 1–22 (MRGMGNMQGMMKKMQKMQKEMM) is disordered.

Belongs to the YbaB/EbfC family. Homodimer.

The protein resides in the cytoplasm. It is found in the nucleoid. Binds to DNA and alters its conformation. May be involved in regulation of gene expression, nucleoid organization and DNA protection. The polypeptide is Nucleoid-associated protein Bsph_0039 (Lysinibacillus sphaericus (strain C3-41)).